The following is a 183-amino-acid chain: Adenine phosphoribosyltransferase (183 aa).

Belongs to the purine/pyrimidine phosphoribosyltransferase family. Homodimer.

Its subcellular location is the cytoplasm. The catalysed reaction is AMP + diphosphate = 5-phospho-alpha-D-ribose 1-diphosphate + adenine. It functions in the pathway purine metabolism; AMP biosynthesis via salvage pathway; AMP from adenine: step 1/1. Its function is as follows. Catalyzes a salvage reaction resulting in the formation of AMP, that is energically less costly than de novo synthesis. The protein is Adenine phosphoribosyltransferase of Salmonella paratyphi C (strain RKS4594).